The primary structure comprises 186 residues: Dehydrin Rab18 (186 aa).

Residues 1–186 (MASYQNRPGG…IKEKLPGGGR (186 aa)) are disordered. Over residues 30-85 (PMGGGGYGTGGGGGATGGQGYGTGGQGYGSGGQGYGTGGQGYGTGTGTEGFGTGGG) the composition is skewed to gly residues. Positions 89–98 (HGQEQLHKES) are enriched in basic and acidic residues. A compositionally biased stretch (low complexity) spans 105–116 (MLHRSGSGSSSS). The segment covering 133 to 144 (KIKEKLPGHHDQ) has biased composition (basic and acidic residues). A compositionally biased stretch (gly residues) spans 152 to 164 (GGMGSGYDAGGYG). Positions 165–186 (GEHHEKKGMMDKIKEKLPGGGR) are enriched in basic and acidic residues.

The protein belongs to the plant dehydrin family.

The protein is Dehydrin Rab18 (RAB18) of Arabidopsis thaliana (Mouse-ear cress).